We begin with the raw amino-acid sequence, 385 residues long: Lipid-A-disaccharide synthase 2 (385 aa).

It belongs to the LpxB family.

It carries out the reaction a lipid X + a UDP-2-N,3-O-bis[(3R)-3-hydroxyacyl]-alpha-D-glucosamine = a lipid A disaccharide + UDP + H(+). Its pathway is bacterial outer membrane biogenesis; LPS lipid A biosynthesis. In terms of biological role, condensation of UDP-2,3-diacylglucosamine and 2,3-diacylglucosamine-1-phosphate to form lipid A disaccharide, a precursor of lipid A, a phosphorylated glycolipid that anchors the lipopolysaccharide to the outer membrane of the cell. This is Lipid-A-disaccharide synthase 2 from Legionella pneumophila subsp. pneumophila (strain Philadelphia 1 / ATCC 33152 / DSM 7513).